Here is a 190-residue protein sequence, read N- to C-terminus: MKLIIGLGNPESRYNNTRHNIGFDLVDSLAAAFGSSFSSGKGKYLAAKITHRQETLMLIKPTTYMNLSGHAVVAAMNFHKVQKNDILVVCDDLNLPSGTMRLRAKGSAGGQNGLKHIIESLGSDEFARLRIGIRLGEMPPGSFSSFVLGKFSAEERVVMDRTLESCREAVLDFAKNGIEHAMNHYNKSAE.

Residue Tyr14 coordinates tRNA. His19 (proton acceptor) is an active-site residue. Tyr64, Asn66, and Asn112 together coordinate tRNA.

This sequence belongs to the PTH family. Monomer.

It is found in the cytoplasm. It catalyses the reaction an N-acyl-L-alpha-aminoacyl-tRNA + H2O = an N-acyl-L-amino acid + a tRNA + H(+). Hydrolyzes ribosome-free peptidyl-tRNAs (with 1 or more amino acids incorporated), which drop off the ribosome during protein synthesis, or as a result of ribosome stalling. Its function is as follows. Catalyzes the release of premature peptidyl moieties from peptidyl-tRNA molecules trapped in stalled 50S ribosomal subunits, and thus maintains levels of free tRNAs and 50S ribosomes. The sequence is that of Peptidyl-tRNA hydrolase from Chlorobium luteolum (strain DSM 273 / BCRC 81028 / 2530) (Pelodictyon luteolum).